The chain runs to 24 residues: Myotoxin TmC4-47.2 (24 aa).

The disordered stretch occupies residues 1–24 (KASSSAPKGWTHHGSRFTFHRGSM). Basic residues predominate over residues 10–24 (WTHHGSRFTFHRGSM). Residues 13–24 (HGSRFTFHRGSM) enclose the C-type lectin domain.

As to expression, expressed by the venom gland.

It is found in the secreted. Its function is as follows. Able to depolarize frog skeletal muscle fibers, but has no effects on squid giant axons. Tetrodotoxin is able to partially antagonize the depolarization. Induces myonecrosis. The polypeptide is Myotoxin TmC4-47.2 (Thalassophryne maculosa (Cano toadfish)).